The chain runs to 288 residues: Extracellular ribonuclease (288 aa).

A signal peptide spans 1 to 26 (MTKKAWFLPLVCVLLISGWLAPAASA).

It localises to the secreted. In terms of biological role, mg(2+)-activated ribonuclease which hydrolyzes RNA apparently nonspecifically into oligonucleotides with 5'-terminal phosphate. This Bacillus subtilis (strain 168) protein is Extracellular ribonuclease (bsn).